The sequence spans 64 residues: Large ribosomal subunit protein bL35 (64 aa).

This sequence belongs to the bacterial ribosomal protein bL35 family.

The protein is Large ribosomal subunit protein bL35 of Mycoplasmopsis pulmonis (strain UAB CTIP) (Mycoplasma pulmonis).